The following is a 29-amino-acid chain: Cytochrome b6-f complex subunit 8 (29 aa).

The chain crosses the membrane as a helical span at residues 3-23 (ILTLGWVSVLTLFTYSIAMVV).

This sequence belongs to the PetN family. The 4 large subunits of the cytochrome b6-f complex are cytochrome b6, subunit IV (17 kDa polypeptide, PetD), cytochrome f and the Rieske protein, while the 4 small subunits are PetG, PetL, PetM and PetN. The complex functions as a dimer.

It localises to the cellular thylakoid membrane. Functionally, component of the cytochrome b6-f complex, which mediates electron transfer between photosystem II (PSII) and photosystem I (PSI), cyclic electron flow around PSI, and state transitions. In Acaryochloris marina (strain MBIC 11017), this protein is Cytochrome b6-f complex subunit 8.